A 104-amino-acid chain; its full sequence is MFAVIRTGGKQYRVSPDTVLKVEKLDAEAGATVTFTDVLAVGGESGTTIGAPLVAGATVTATVIAQDRLDTVIIFKKRRRQNSRRKNGHRQPVTVLRIAAINAA.

The protein belongs to the bacterial ribosomal protein bL21 family. As to quaternary structure, part of the 50S ribosomal subunit. Contacts protein L20.

Its function is as follows. This protein binds to 23S rRNA in the presence of protein L20. The sequence is that of Large ribosomal subunit protein bL21 from Gluconacetobacter diazotrophicus (strain ATCC 49037 / DSM 5601 / CCUG 37298 / CIP 103539 / LMG 7603 / PAl5).